The following is a 232-amino-acid chain: Small ribosomal subunit protein uS3 (232 aa).

Residues 39 to 107 enclose the KH type-2 domain; sequence IRAILHKELK…DVVINIVEIR (69 aa).

The protein belongs to the universal ribosomal protein uS3 family. As to quaternary structure, part of the 30S ribosomal subunit. Forms a tight complex with proteins S10 and S14.

Its function is as follows. Binds the lower part of the 30S subunit head. Binds mRNA in the 70S ribosome, positioning it for translation. This Rhodopseudomonas palustris (strain BisA53) protein is Small ribosomal subunit protein uS3.